A 28-amino-acid polypeptide reads, in one-letter code: Gamma-conotoxin-like de7a (28 aa).

Intrachain disulfides connect C2–C18, C9–C22, and C17–C27. Residue P4 is modified to 4-hydroxyproline. A 4-carboxyglutamate mark is found at E13 and E16. A Serine amide modification is found at S28.

Belongs to the conotoxin O1 superfamily. In terms of tissue distribution, expressed by the venom duct.

It localises to the secreted. Gamma-conotoxins may act on voltage-gated non-specific cation pacemaker channels (HCN). In Conasprella delessertii (Sozon's cone), this protein is Gamma-conotoxin-like de7a.